The primary structure comprises 283 residues: uncharacterized protein (283 aa).

This is an uncharacterized protein from Acanthamoeba polyphaga mimivirus (APMV).